A 346-amino-acid polypeptide reads, in one-letter code: Biotin synthase (346 aa).

The Radical SAM core domain occupies 38-256; the sequence is RQVQVSTLLS…IAVARIMMPT (219 aa). Cys53, Cys57, and Cys60 together coordinate [4Fe-4S] cluster. Positions 97, 128, 188, and 260 each coordinate [2Fe-2S] cluster.

The protein belongs to the radical SAM superfamily. Biotin synthase family. In terms of assembly, homodimer. The cofactor is [4Fe-4S] cluster. It depends on [2Fe-2S] cluster as a cofactor.

The catalysed reaction is (4R,5S)-dethiobiotin + (sulfur carrier)-SH + 2 reduced [2Fe-2S]-[ferredoxin] + 2 S-adenosyl-L-methionine = (sulfur carrier)-H + biotin + 2 5'-deoxyadenosine + 2 L-methionine + 2 oxidized [2Fe-2S]-[ferredoxin]. It participates in cofactor biosynthesis; biotin biosynthesis; biotin from 7,8-diaminononanoate: step 2/2. Its function is as follows. Catalyzes the conversion of dethiobiotin (DTB) to biotin by the insertion of a sulfur atom into dethiobiotin via a radical-based mechanism. The polypeptide is Biotin synthase (Pseudescherichia vulneris (Escherichia vulneris)).